Reading from the N-terminus, the 602-residue chain is MNHIRNFSIIAHIDHGKSTLADRLIQRCGGLADRDMEAQVLDSMDIEKERGITIKAQTAALQYKAKDGQVYNLNLIDTPGHVDFSYEVSRSLSACEGALLVVDASQGVEAQTVANCYTALELGVEVTAVLNKMDLPQADPENARAEIEDVIGIDASDAIPCSAKTGMGIEEILEAVVAKVPPPKGDPNGQLRAMIIDSWFDTYVGVVMLVRVVDGELKRGERFKMMASGAAYEANNLGVFTPADVPRDVLRAGEVGYIIAGIKELKAAKVGDTITLEKKLPNNLGPATEALPGFKEIKPQVFAGLYPTEASEYDQLRDALEKLQLNDSSLQFEPEVSQALGFGFRCGFLGLLHMEIVQERLEREFDQDLITTAPSVVYEVVKGDGEVIQVENPSKMPDAGRIEEVREPIVTVHLYMPQDYVGPVMTLANQKRGVQINMQYHGRQVMLTYEMPLGEIVLDFFDKLKSVSRGYASMDYEFKEYRASDVVKVDILLNGEKVDALSIIVHRSQATYRGRAVVAKMREIISRQMFDVAIQAAIGANIIARETVKAMRKNVLAKCYGGDITRKRKLLEKQKAGKKRMKQIGSVEVPQEAFLAILQVED.

One can recognise a tr-type G domain in the interval Asn-2–Lys-184. GTP-binding positions include Asp-14–Thr-19 and Asn-131–Asp-134.

Belongs to the TRAFAC class translation factor GTPase superfamily. Classic translation factor GTPase family. LepA subfamily.

It localises to the cell inner membrane. It catalyses the reaction GTP + H2O = GDP + phosphate + H(+). Required for accurate and efficient protein synthesis under certain stress conditions. May act as a fidelity factor of the translation reaction, by catalyzing a one-codon backward translocation of tRNAs on improperly translocated ribosomes. Back-translocation proceeds from a post-translocation (POST) complex to a pre-translocation (PRE) complex, thus giving elongation factor G a second chance to translocate the tRNAs correctly. Binds to ribosomes in a GTP-dependent manner. In Delftia acidovorans (strain DSM 14801 / SPH-1), this protein is Elongation factor 4.